We begin with the raw amino-acid sequence, 218 residues long: Ribonuclease HII (218 aa).

The RNase H type-2 domain maps to 22–211; that stretch reads VRIAGVDEAG…VRAALESRFS (190 aa). The a divalent metal cation site is built by D28, E29, and D119.

The protein belongs to the RNase HII family. Mn(2+) is required as a cofactor. Requires Mg(2+) as cofactor.

It is found in the cytoplasm. The enzyme catalyses Endonucleolytic cleavage to 5'-phosphomonoester.. In terms of biological role, endonuclease that specifically degrades the RNA of RNA-DNA hybrids. The polypeptide is Ribonuclease HII (Maricaulis maris (strain MCS10) (Caulobacter maris)).